We begin with the raw amino-acid sequence, 215 residues long: Probable transaldolase (215 aa).

The active-site Schiff-base intermediate with substrate is K83.

Belongs to the transaldolase family. Type 3B subfamily.

Its subcellular location is the cytoplasm. The catalysed reaction is D-sedoheptulose 7-phosphate + D-glyceraldehyde 3-phosphate = D-erythrose 4-phosphate + beta-D-fructose 6-phosphate. It functions in the pathway carbohydrate degradation; pentose phosphate pathway; D-glyceraldehyde 3-phosphate and beta-D-fructose 6-phosphate from D-ribose 5-phosphate and D-xylulose 5-phosphate (non-oxidative stage): step 2/3. In terms of biological role, transaldolase is important for the balance of metabolites in the pentose-phosphate pathway. The protein is Probable transaldolase of Heliobacterium modesticaldum (strain ATCC 51547 / Ice1).